We begin with the raw amino-acid sequence, 367 residues long: Putative ionic transporter y4hA (367 aa).

The next 11 membrane-spanning stretches (helical) occupy residues 12–32 (VPLW…MTLA), 39–59 (SVVL…ASVH), 74–94 (AILL…SLML), 108–128 (VFAA…VLGG), 143–163 (AALA…NFVT), 172–192 (AIQL…FLFV), 221–241 (LAAG…AMLL), 249–269 (VEAL…VVLL), 291–311 (VLGS…AISV), 318–338 (ALGL…VGTI), and 347–367 (VLQG…SAIP).

Belongs to the Ca(2+):cation antiporter (CaCA) (TC 2.A.19) family.

It is found in the cell membrane. Functionally, possible cation transporter. In Sinorhizobium fredii (strain NBRC 101917 / NGR234), this protein is Putative ionic transporter y4hA.